A 365-amino-acid polypeptide reads, in one-letter code: Alanine racemase (365 aa).

Residue Lys-32 is the Proton acceptor; specific for D-alanine of the active site. Residue Lys-32 is modified to N6-(pyridoxal phosphate)lysine. A substrate-binding site is contributed by Arg-128. The active-site Proton acceptor; specific for L-alanine is Tyr-257. Residue Met-305 participates in substrate binding.

It belongs to the alanine racemase family. The cofactor is pyridoxal 5'-phosphate.

It carries out the reaction L-alanine = D-alanine. The protein operates within amino-acid biosynthesis; D-alanine biosynthesis; D-alanine from L-alanine: step 1/1. In terms of biological role, catalyzes the interconversion of L-alanine and D-alanine. May also act on other amino acids. This is Alanine racemase (alr) from Francisella tularensis subsp. holarctica (strain OSU18).